The chain runs to 226 residues: ATP synthase subunit a (226 aa).

The next 6 helical transmembrane spans lie at 17-37, 79-99, 105-125, 134-154, 176-196, and 199-219; these read FSYFFHIGLVALIAVIVAMMA, LVATLGIIVFFSNIIGIIPGF, SLNLTLSLAIIVFVYYHFEGI, FAHFMGPIKLLAPLMFPIEIV, LFLMVILALVPYIAPLPAYVL, and FMAFLQAFIFMILTYVYLAGA.

The protein belongs to the ATPase A chain family. In terms of assembly, F-type ATPases have 2 components, CF(1) - the catalytic core - and CF(0) - the membrane proton channel. CF(1) has five subunits: alpha(3), beta(3), gamma(1), delta(1), epsilon(1). CF(0) has three main subunits: a(1), b(2) and c(9-12). The alpha and beta chains form an alternating ring which encloses part of the gamma chain. CF(1) is attached to CF(0) by a central stalk formed by the gamma and epsilon chains, while a peripheral stalk is formed by the delta and b chains.

The protein localises to the cell inner membrane. Key component of the proton channel; it plays a direct role in the translocation of protons across the membrane. The chain is ATP synthase subunit a from Campylobacter jejuni subsp. jejuni serotype O:6 (strain 81116 / NCTC 11828).